We begin with the raw amino-acid sequence, 1366 residues long: ABC multidrug transporter MDR2 (1366 aa).

Residues 52–72 (IALIVIGTIAGIGAGIPFPLL) traverse the membrane as a helical segment. In terms of domain architecture, ABC transmembrane type-1 1 spans 56-354 (VIGTIAGIGA…MAPFMHIFAS (299 aa)). N-linked (GlcNAc...) asparagine glycosylation is present at N84. 5 helical membrane-spanning segments follow: residues 106–126 (VLQV…HTGC), 180–200 (KVGL…VAFL), 202–222 (VATI…MAFG), 288–308 (IQFG…FWQG), and 323–343 (VSVG…FVLS). The region spanning 390 to 669 (IELQDVTFNY…DGVYAGMVRL (280 aa)) is the ABC transporter 1 domain. An ATP-binding site is contributed by 425–432 (GTSGSGKS). N620 carries an N-linked (GlcNAc...) asparagine glycan. The disordered stretch occupies residues 727–746 (PEEADSLPTEPEAKKEKPKQ). 4 helical membrane passes run 768–788 (LGLI…VIFG), 807–827 (GMLF…AVIV), 868–888 (LLVA…GTTI), and 898–918 (LFAG…VLLA). The ABC transmembrane type-1 2 domain occupies 768–1055 (LGLITSIMIG…MFALVPDISK (288 aa)). N976 is a glycosylation site (N-linked (GlcNAc...) asparagine). The next 2 membrane-spanning stretches (helical) occupy residues 995 to 1015 (FWLS…YWWG) and 1019 to 1039 (ILAG…LLFS). The 240-residue stretch at 1122-1361 (VQFRNVHFRY…CESYRANVIH (240 aa)) folds into the ABC transporter 2 domain. An ATP-binding site is contributed by 1157 to 1164 (GPSGSGKS).

It belongs to the ABC transporter superfamily. ABCB family. Multidrug resistance exporter (TC 3.A.1.201) subfamily.

The protein localises to the cell membrane. In terms of biological role, pleiotropic ABC efflux transporter that may be involved in the modulation susceptibility to a wide range of unrelated cytotoxic compounds. Does not act as an efflux pump for azoles, including fluconazole, itraconazole, ketoconazole, miconazole and voriconazole, nor does it modulate susceptibility to cycloheximide. The sequence is that of ABC multidrug transporter MDR2 from Trichophyton rubrum (strain ATCC MYA-4607 / CBS 118892) (Athlete's foot fungus).